The sequence spans 571 residues: Sulfite reductase [NADPH] hemoprotein beta-component (571 aa).

Positions 436, 442, 481, and 485 each coordinate [4Fe-4S] cluster. Cysteine 485 contributes to the siroheme binding site.

It belongs to the nitrite and sulfite reductase 4Fe-4S domain family. Alpha(8)-beta(8). The alpha component is a flavoprotein, the beta component is a hemoprotein. It depends on siroheme as a cofactor. The cofactor is [4Fe-4S] cluster.

The catalysed reaction is hydrogen sulfide + 3 NADP(+) + 3 H2O = sulfite + 3 NADPH + 4 H(+). The protein operates within sulfur metabolism; hydrogen sulfide biosynthesis; hydrogen sulfide from sulfite (NADPH route): step 1/1. Component of the sulfite reductase complex that catalyzes the 6-electron reduction of sulfite to sulfide. This is one of several activities required for the biosynthesis of L-cysteine from sulfate. In Anoxybacillus flavithermus (strain DSM 21510 / WK1), this protein is Sulfite reductase [NADPH] hemoprotein beta-component.